A 413-amino-acid chain; its full sequence is MNRILKQVSNTKGKGIRFYSSSSQLDSEYMFPSVRRLLVEYGINSSKEVTATGPQNRLLKGDVLAYIKTKNLSPVDRLSLIASSVKSSQPSSSSSPSIVDSPTLTSQIKDQIKIVTTITNDKNKSKVIYEDIPNNNIRRVIATKLSQSKQQVPHFYMTVECELDNVLAMRKSMPENVKISVNDFVLRACALALRDNPQANSKWSDEHGEAILNPTVDISFAVSTDRGLITPIITNTDKKQLLAISNESKQLALKARDGKLKPEEFIGGTFSVSNLGMFGITSFNAIINYPQAGILAIGTGRKVLRPPSTYQPIETNLNASYGSEGKSEIINTNGPLTTEQLEKLFDNTVSKKQDIKQQIINEQPQPPKYEQPKVANVMDVTLSGDNRVFDDEIAGKFLSSFKYYLSNPQNMIL.

The N-terminal 19 residues, 1–19 (MNRILKQVSNTKGKGIRFY), are a transit peptide targeting the mitochondrion. The Peripheral subunit-binding (PSBD) domain maps to 29–67 (YMFPSVRRLLVEYGINSSKEVTATGPQNRLLKGDVLAYI).

The protein belongs to the 2-oxoacid dehydrogenase family.

Its subcellular location is the mitochondrion. Its function is as follows. The pyruvate dehydrogenase complex catalyzes the overall conversion of pyruvate to acetyl-CoA and CO(2). It contains multiple copies of three enzymatic components: pyruvate dehydrogenase (E1), dihydrolipoamide acetyltransferase (E2) and lipoamide dehydrogenase (E3). In Dictyostelium discoideum (Social amoeba), this protein is Pyruvate dehydrogenase complex subunit homolog DDB_G0271564, mitochondrial (pdhX).